Reading from the N-terminus, the 287-residue chain is Probable endonuclease 4 (287 aa).

The Zn(2+) site is built by histidine 69, histidine 109, glutamate 144, aspartate 178, histidine 181, histidine 215, aspartate 228, histidine 230, and glutamate 260.

Belongs to the AP endonuclease 2 family. Zn(2+) is required as a cofactor.

The enzyme catalyses Endonucleolytic cleavage to 5'-phosphooligonucleotide end-products.. Its function is as follows. Endonuclease IV plays a role in DNA repair. It cleaves phosphodiester bonds at apurinic or apyrimidinic (AP) sites, generating a 3'-hydroxyl group and a 5'-terminal sugar phosphate. The polypeptide is Probable endonuclease 4 (Thermotoga maritima (strain ATCC 43589 / DSM 3109 / JCM 10099 / NBRC 100826 / MSB8)).